The sequence spans 108 residues: MATRLANTPQRETGTVIERKEQQLKPPAMYKVVLLNDDYTPMEFVVMILQQYFSRDRETATQIMLTVHREGKGVCGIYTRDIAATKVELVSTHARQAGHPLQCVMEEA.

It belongs to the ClpS family. As to quaternary structure, binds to the N-terminal domain of the chaperone ClpA.

Its function is as follows. Involved in the modulation of the specificity of the ClpAP-mediated ATP-dependent protein degradation. In Cupriavidus metallidurans (strain ATCC 43123 / DSM 2839 / NBRC 102507 / CH34) (Ralstonia metallidurans), this protein is ATP-dependent Clp protease adapter protein ClpS.